The sequence spans 133 residues: Minor spike protein H (133 aa).

The protein belongs to the microviridae H protein family.

The protein resides in the virion. In terms of biological role, probably triggers with protein G the injection of the phage DNA into the host upon conformational changes induced by virus-host receptor interaction. This chain is Minor spike protein H, found in Spiroplasma virus 4 (SpV4).